The following is a 2019-amino-acid chain: MSSWVALNIEPDEAIEEEVDDTKEIQIEEALKLYQNALKLHSQGPQFYAQAAEAYEALLSSDIFKYPESISDFKRSALQDSEAHLDDDVAVIDAVETFPEFSVNDSTSSTLLQTIYLSYKNHGQFTLDTLQAFLQENPRTSDKAQEILSQVSKRTHAALASFAEALERDDTDLNLWRRSARLSNALQSYRLVRYCLESVLADDENCLEVRTDQLGLDETFAQGQLRETLQALDDNLSVSQVPLKKPKKALLRFLERQKDPYPYLPALPSHVRDEDPSKNPLAIRASCYQLTPASHTWAAVGDSILQALIDMERDASKFGPGTSIRFSMPESTADLRSSTAGEVADQDQSSHMENGESANHIPEEDVDIANTTESAAPKTLRKDQDASSILEHVDDQSSIDQRAEKQLMESLENQSARQNDATTVQDVPNVDEVEPNPSSAGRKRPSASAANEDYQAEPVRTKSRRTRLRDSIAETSLQSDEVSFDQNKYYEDRLQTYVEADEWMFDTVGPLLSKLGVDKLESLDELRRQSAANCSKSSVERSSNQPTSAVHVLYRDLDSIVKTWDEAKSQAMLQDDTSLTFQDMKAMDNSGLTIFLEHSRKSARKTGLKPSFTDDKVLSKFLKGVNEEWLHLHEVGFAWLKLLLMPVYGKSPVRKNSRSKKWPVMESAYVAFQWPDVLKEKVVQLLVRDDEYIFRKMREQAEQTELQILNHTPQTPFKYTRDHLAYLEMTQTVFEIHLDVYASINNPHSEVDQDTRLVQRDRLMRWSMLARTALSHYLDHGPSRKDSQNSIILRHIWASTFHSNMEPDVHREHILLCLQDLKEMLHRLSILEIHLMNNAMMPELSADAIDQEISKLNSMDFFMKIFTPGSEDPVELIETIEPIVEPSSVEIPEESESNDQSLSQSMVQLKEMRSFLDRGDAMLKLFLWQRLRDAYQAIDYPPKVVSCYLRSVETIIQELLGASYLEESNEHREIALIRWLKSLDRILMKLVTLVLQQSDKAYECLDMEHLRSSMSALTTLTNLLHSFALYEDSVRVGQTPSSSVRGSLSKSLGNFTEKLREMEVRCWILQYTLLKEAITQNGDLFESPLEDRILFLRSVHNALGIRKMCKRSNKQFLKLMKAEFFSLESKEAYESEICQILWDLYGINLSPPGRFLFEHECPPEKLDRSTAIKLVDFVLKLAKRMNIKDLSKSELKSTIEKIQQAIGTTKSSPPLTYNKRILSAYLKSPINPTEIFRAVRGVADLPLVPVPTESAVIAQNGWYFLLGHAALTKFRSQKRLNPVPTTDLDEAITFFRQDLDHATGRWESWYRLAQTYDSKLEEDITWSADKINNNRTELVTWQRNAIHCYAMAVATAIRSAEPTPETRATLSELYTDFGIRLYSSSREPLSMAAFSLADFTRHYSNEESQRMYQGKPFKEMRLYSVWNLARYLLKRATIDKPKSWMNHYMLSKCLWKMFSCDDSVRGNAQRISVDDLLDSLLDAIDTLPQRKDSRSDPIFEPHYKLVSIVHKLVDRGTLTPAEGSQTLMATPLARKVQPPEDKAGWKPYILEVLRRLKHADKSNWHHRMAVRAAHVTYDDTRDTVSAAAAKNELTQQIFTKTMTIQVWRPEFERPGRHFVYTTRYVYFFVSLLDQLNDRANLDQLLRRVRKKQGDFINHTKLWEDVCLTYAKVIRRAGSINEGHEENVFKPIGWEEFVANTARLENLPQLAPGSQVLLELLRDAIELKKLNNNLMKVSLLEDLIADLYSRLYEINMPQVLEQANEENKEKMKVDHLLMASDGAADTPTPPNSAPASEAPAPRGRTKGIARRDVQKRAETIVGRKLTPRAPAAKASVPAESEPPATSEPAAPSGNQPNKTSFEMGQQSDIPQSIQDSADDESELSEIDDEKLSKLAAERKLLFPNLRDRISPDPDSEMSVPASIDGDAADEVGDGDADLNEAEGGGETTVEEGEGEDGEEGDEADLERDENDGDEESLEEGEGNGEDTENAQDMEDEAEEPEVIEGDPPKENASEPEPMET.

Disordered regions lie at residues 319 to 467 (GPGT…RRTR) and 1780 to 2019 (DGAA…PMET). Residues 334–347 (DLRSSTAGEVADQD) are compositionally biased toward polar residues. Residues 380–407 (LRKDQDASSILEHVDDQSSIDQRAEKQL) show a composition bias toward basic and acidic residues. Polar residues predominate over residues 411–426 (LENQSARQNDATTVQD). The span at 1808-1817 (ARRDVQKRAE) shows a compositional bias: basic and acidic residues. Over residues 1826–1851 (PRAPAAKASVPAESEPPATSEPAAPS) the composition is skewed to low complexity. Over residues 1852–1863 (GNQPNKTSFEMG) the composition is skewed to polar residues. Low complexity predominate over residues 1864–1874 (QQSDIPQSIQD). Positions 1875–1887 (SADDESELSEIDD) are enriched in acidic residues. Basic and acidic residues predominate over residues 1888-1910 (EKLSKLAAERKLLFPNLRDRISP). Composition is skewed to acidic residues over residues 1925-1939 (DAADEVGDGDADLNE) and 1947-2003 (TVEE…EVIE).

Belongs to the HIR3 family.

Its subcellular location is the nucleus. Has a role in a nucleosome assembly pathway that is required for the integrity of heterochromatin and proper chromosome segregation. The protein is Histone transcription regulator 3 homolog (hir3) of Aspergillus fumigatus (strain ATCC MYA-4609 / CBS 101355 / FGSC A1100 / Af293) (Neosartorya fumigata).